The chain runs to 478 residues: MTTTVETAVATGRVARVIGPVVDVEFPVDAMPDMYNALHVEVADPANAGEKKTLTLEVAQHLGDGLVRTISMQPTDGLVRQAAVTDTGTGITVPVGDFTKGKVFNTLGEVLNVDEKYDGERWSIHRKAPRFDELESKTEMFETGVKVIDLLTPYVKGGKIGLFGGAGVGKTVLIQEMIYRVANNHDGVSVFAGVGERTREGNDLIEEMSDSGVIDKTALVFGQMDEPPGTRLRVALAGLTMAEYFRDVQKQDVLFFIDNIFRFTQAGSEVSTLLGRMPSAVGYQPNLADEMGLLQERITSTRGHSITSMQAIYVPADDLTDPAPATTFAHLDATTVLSRPISEKGIYPAVDPLDSTSRILDPRYIAQDHYDAAMRVKTVLQKYKDLQDIIAILGIDELGEEDKLVVHRARRVERFLSQNTHVAKQFTGVDGSDVPLDESITAFNAIIDGEYDHFPEQAFFMCGGIEDLKANAKELGVS.

164–171 is an ATP binding site; it reads GGAGVGKT.

The protein belongs to the ATPase alpha/beta chains family. In terms of assembly, F-type ATPases have 2 components, CF(1) - the catalytic core - and CF(0) - the membrane proton channel. CF(1) has five subunits: alpha(3), beta(3), gamma(1), delta(1), epsilon(1). CF(0) has three main subunits: a(1), b(2) and c(9-12). The alpha and beta chains form an alternating ring which encloses part of the gamma chain. CF(1) is attached to CF(0) by a central stalk formed by the gamma and epsilon chains, while a peripheral stalk is formed by the delta and b chains.

The protein localises to the cell membrane. The enzyme catalyses ATP + H2O + 4 H(+)(in) = ADP + phosphate + 5 H(+)(out). In terms of biological role, produces ATP from ADP in the presence of a proton gradient across the membrane. The catalytic sites are hosted primarily by the beta subunits. This Streptomyces avermitilis (strain ATCC 31267 / DSM 46492 / JCM 5070 / NBRC 14893 / NCIMB 12804 / NRRL 8165 / MA-4680) protein is ATP synthase subunit beta.